Here is a 153-residue protein sequence, read N- to C-terminus: Actin-related protein 2/3 complex subunit 5-like protein (153 aa).

Residue S64 is modified to Phosphoserine.

This sequence belongs to the ARPC5 family. May be a component of the Arp2/3 complex in which it may replace ARPC5.

It localises to the cytoplasm. Its subcellular location is the cytoskeleton. Its function is as follows. May function as component of the Arp2/3 complex which is involved in regulation of actin polymerization and together with an activating nucleation-promoting factor (NPF) mediates the formation of branched actin networks. This chain is Actin-related protein 2/3 complex subunit 5-like protein (Arpc5l), found in Mus musculus (Mouse).